The following is a 126-amino-acid chain: Large ribosomal subunit protein bL12 (126 aa).

This sequence belongs to the bacterial ribosomal protein bL12 family. In terms of assembly, homodimer. Part of the ribosomal stalk of the 50S ribosomal subunit. Forms a multimeric L10(L12)X complex, where L10 forms an elongated spine to which 2 to 4 L12 dimers bind in a sequential fashion. Binds GTP-bound translation factors.

Its function is as follows. Forms part of the ribosomal stalk which helps the ribosome interact with GTP-bound translation factors. Is thus essential for accurate translation. The sequence is that of Large ribosomal subunit protein bL12 from Acidovorax ebreus (strain TPSY) (Diaphorobacter sp. (strain TPSY)).